A 542-amino-acid polypeptide reads, in one-letter code: Cytochrome P450 monooxygenase TRI1 (542 aa).

Residues 37 to 54 traverse the membrane as a helical segment; the sequence is LIYFLCFVVLGRAVQWFL. N167, N297, and N428 each carry an N-linked (GlcNAc...) asparagine glycan. Heme is bound at residue C469.

It belongs to the cytochrome P450 family. The cofactor is heme.

Its subcellular location is the membrane. The protein operates within sesquiterpene biosynthesis; trichothecene biosynthesis. Cytochrome P450 monooxygenase; part of 2-gene cluster involved in trichothecene C-8 modification that mediates the biosynthesis of T2-toxin. The biosynthesis of trichothecenes begins with the cyclization of farnesyl diphosphate to trichodiene and is catalyzed by the trichodiene synthase TRI5. Trichodiene undergoes a series of oxygenations catalyzed by the cytochrome P450 monooxygenase TRI4. TRI4 controls the addition of four oxygens at C-2, C-3, C-11, and the C-12, C-13-epoxide to form the intermediate isotrichotriol. Isotrichotriol then undergoes a non-enzymatic isomerization and cyclization to form isotrichodermol. During this process, the oxygen at the C-2 position becomes the pyran ring oxygen and the hydroxyl group at C-11 is lost. More complex type A trichothecenes are built by modifying isotrichodermol through a series of paired hydroxylation and acetylation or acylation steps. Isotrichodermol is converted to isotrichodermin by the acetyltransferase TRI101. TRI101 encodes a C-3 transacetylase that acts as a self-protection or resistance factor during biosynthesis and that the presence of a free C-3 hydroxyl group is a key component of Fusarium trichothecene phytotoxicity. A second hydroxyl group is added to C-15 by the trichothecene C-15 hydroxylase TRI11, producing 15-decalonectrin, which is then acetylated by TRI3, producing calonectrin. A third hydroxyl group is added at C-4 by the cytochrome P450 monooxygenase TRI13, converting calonectrin to 3,15-diacetoxyspirpenol, which is subsequently acetylated by the acetyltransferase TRI7. A fourth hydroxyl group is added to C-8 by the cytochrome P450 monooxygenase TRI1, followed by the addition of an isovaleryl moiety by TRI16. Finally, the acetyl group is removed from the C-3 position by the trichothecene C-3 esterase TRI8 to produce T-2 toxin. The polypeptide is Cytochrome P450 monooxygenase TRI1 (Fusarium sporotrichioides).